The sequence spans 134 residues: MNTEMYQTPMEVAVYQLHNFSISFFSSLLGGDVVSVKLDNSASGASVVALDNKIEQAMDLVKNHLMYAVREEVEVLKEQIRELVEKNSQLERENTLLKTLASPEQLEKFQSRLSPEEPAPEAPETPEAPGGSAV.

The tract at residues 1 to 60 (MNTEMYQTPMEVAVYQLHNFSISFFSSLLGGDVVSVKLDNSASGASVVALDNKIEQAMDL) is AP1-binding. The segment at 76-97 (LKEQIRELVEKNSQLERENTLL) is leucine-zipper. The interval 101–134 (ASPEQLEKFQSRLSPEEPAPEAPETPEAPGGSAV) is disordered. Ser102 carries the phosphoserine modification. Residue Thr125 is modified to Phosphothreonine. A compositionally biased stretch (low complexity) spans 125-134 (TPEAPGGSAV).

Belongs to the TSC-22/Dip/Bun family. As to quaternary structure, can form homodimers, however it is likely to function as a monomer. Interacts with NFKB1. Interacts (via N-terminus) with JUN and FOS; these interactions inhibit the binding of active AP1 to its target DNA. Interacts with MYOD1. Interacts with HDAC1; this interaction affects HDAC1 activity on MYOG promoter and thus inhibits MYOD1 transcriptional activity.

Its subcellular location is the cytoplasm. It localises to the nucleus. In terms of biological role, protects T-cells from IL2 deprivation-induced apoptosis through the inhibition of FOXO3A transcriptional activity that leads to the down-regulation of the pro-apoptotic factor BCL2L11. In macrophages, plays a role in the anti-inflammatory and immunosuppressive effects of glucocorticoids and IL10. In T-cells, inhibits anti-CD3-induced NFKB1 nuclear translocation and thereby NFKB1 DNA-binding activities. In vitro, suppresses AP-1 transcription factor complex DNA-binding activities. This chain is TSC22 domain family protein 3 (Tsc22d3), found in Rattus norvegicus (Rat).